The sequence spans 5209 residues: E3 ubiquitin-protein ligase rnf213-alpha (5209 aa).

2 stretches are compositionally biased toward polar residues: residues 27–52 and 61–72; these read SQSY…QITN and ESKSLEIQNANV. The segment at 27–373 is disordered; the sequence is SQSYETTQGT…KRNTRSTQHI (347 aa). Residues 85–101 show a composition bias toward basic residues; sequence PKKKKRKKRKKEKKKKS. The segment covering 108 to 118 has biased composition (low complexity); sequence SSLTSDLSDIS. Residues 119-128 show a composition bias toward basic and acidic residues; the sequence is LTDKEKKMDT. Composition is skewed to polar residues over residues 167 to 177 and 184 to 195; these read LSASALTTGSS and IGTTQKPVSASA. The span at 205 to 218 shows a compositional bias: basic and acidic residues; it reads QTKEEKVKCKDEGQ. A compositionally biased stretch (polar residues) spans 219–243; that stretch reads KSLSAKAQHTPNANVDQNANVQSDA. Residues 256–269 show a composition bias toward low complexity; the sequence is KSSSVKTKPSKSTV. Composition is skewed to basic and acidic residues over residues 271-288 and 330-352; these read DPKK…RDNE and MKVE…SKES. ATP-binding positions include 2036 to 2041, E2135, D2193, R2252, K2535, and S2610; that span reads GVGKSL. Zn(2+)-binding residues include C4005, C4008, C4020, H4022, C4025, C4028, C4040, C4043, C4507, and H4511. The RING-type zinc-finger motif lies at 4005–4043; the sequence is CPVCMGDPRDPLSLPCDHIYCLTCIRQWLVPGQMHCPLC. The RZ-type zinc-finger motif lies at 4487 to 4557; sequence MPDDMLAVAQ…MQIQADRTQS (71 aa). The active-site Nucleophile; for E3 ubiquitin-lipopolysaccharide ligase activity is the C4518. Residues C4527 and C4530 each coordinate Zn(2+).

Belongs to the AAA ATPase family.

Its subcellular location is the cytoplasm. It is found in the cytosol. The protein resides in the lipid droplet. The enzyme catalyses S-ubiquitinyl-[E2 ubiquitin-conjugating enzyme]-L-cysteine + [acceptor protein]-L-lysine = [E2 ubiquitin-conjugating enzyme]-L-cysteine + N(6)-ubiquitinyl-[acceptor protein]-L-lysine.. It carries out the reaction ATP + H2O = ADP + phosphate + H(+). Its pathway is protein modification; protein ubiquitination. Atypical E3 ubiquitin ligase that can catalyze ubiquitination of both proteins and lipids, and which is involved in various processes, such as lipid metabolism, angiogenesis and cell-autonomous immunity. Acts as a key immune sensor by catalyzing ubiquitination of the lipid A moiety of bacterial lipopolysaccharide (LPS) via its RZ-type zinc-finger: restricts the proliferation of cytosolic bacteria, such as Salmonella, by generating the bacterial ubiquitin coat through the ubiquitination of LPS. Ubiquitination of LPS triggers cell-autonomous immunity, such as antibacterial autophagy, leading to degradation of the microbial invader. Involved in lipid metabolism by regulating fat storage and lipid droplet formation; act by inhibiting the lipolytic process. Also regulates lipotoxicity by inhibiting desaturation of fatty acids. Also acts as an E3 ubiquitin-protein ligase via its RING-type zinc finger. Involved in the non-canonical Wnt signaling pathway in vascular development: acts by mediating ubiquitination and degradation of proteins downstream of rspo3, leading to inhibit the non-canonical Wnt signaling pathway and promoting vessel regression. Also has ATPase activity; ATPase activity is required for ubiquitination of LPS. Also involved in neuromuscular regulation. The sequence is that of E3 ubiquitin-protein ligase rnf213-alpha from Danio rerio (Zebrafish).